We begin with the raw amino-acid sequence, 803 residues long: MGVGLCGRGIVAKPRLYEVASDLGTDSKTLMGILREMGEFVKSPSSALEPPVVRKLAKAFAEKYPDKVEEKKEHTPPAPVVETPKAPPPLPRPIIRHAVRGVPSGAPRPGNNPYAPRQGMGQLATPGPATKRPVKFKAEGDKKPASTHRRVPAPLPQKRTPLRGRGAPGAFGRGNKPKSRKSKTLKRQEFEMRDAPVIGGVTIPRGDGRVIRLMQGASVTDFAEKIDVLPANLLSVLFHLGEMATATESLDEATFEILAEEIGYKVQIVSPDDEDRALLESFSVNLAAEHAEDSELDLAIRPPVVTIMGHVDHGKTLLLDTIRNTNTLAEESGGITQHIGAYQVSVGDRFVTFIDTPGHEAFTAMRARGAKVTDIAVLVVAADDGIMPQTIEALDHARSADVPIVVAVNKIDKEGANPAKIRQQMTEFDVIPEEYGGDVMFIDISAKTGQGVDALLEAILLTADAALELRANPDRTARGVTIEAKLDAGRGAVATVLVQSGTLRVGDRVVTGCAYGRVRAMVDENGLPVESAPPSRPVRVQGLSSVPKAGDSFIVVAEDRQARQIAEKREANERNAQLAKSRKRVSLEDFTRAIQEGRVQSLNMIIKGDVSGAVEALEESLSKLDVGEEVSLRIIHRGVGAITESDVNLATVDNAVVIGFNVRPDRKARDRAAREGVDVRFYSVIYDAIEDIEKSLKGLLKPELEERKLGLAIVKEVFHSSRVGTIAGCSVESGSITRNAKARLIRDGVVVVNDLTVTSLRRFKDDVTEVKSGFECGVGLGSCDDIRIGDEIETIQIVEKPRA.

Residues 65–75 (PDKVEEKKEHT) are compositionally biased toward basic and acidic residues. Residues 65-186 (PDKVEEKKEH…PKSRKSKTLK (122 aa)) are disordered. The span at 175 to 185 (NKPKSRKSKTL) shows a compositional bias: basic residues. The tr-type G domain maps to 300 to 468 (IRPPVVTIMG…ILLTADAALE (169 aa)). The interval 309–316 (GHVDHGKT) is G1. 309-316 (GHVDHGKT) contributes to the GTP binding site. A G2 region spans residues 334-338 (GITQH). Residues 355 to 358 (DTPG) form a G3 region. Residues 355-359 (DTPGH) and 409-412 (NKID) contribute to the GTP site. The tract at residues 409–412 (NKID) is G4. Positions 445 to 447 (SAK) are G5.

The protein belongs to the TRAFAC class translation factor GTPase superfamily. Classic translation factor GTPase family. IF-2 subfamily.

The protein localises to the cytoplasm. One of the essential components for the initiation of protein synthesis. Protects formylmethionyl-tRNA from spontaneous hydrolysis and promotes its binding to the 30S ribosomal subunits. Also involved in the hydrolysis of GTP during the formation of the 70S ribosomal complex. The polypeptide is Translation initiation factor IF-2 (Tropheryma whipplei (strain Twist) (Whipple's bacillus)).